Reading from the N-terminus, the 271-residue chain is 4-hydroxy-tetrahydrodipicolinate reductase (271 aa).

Residue 10-15 coordinates NAD(+); sequence GAAGRM. Arg-37 contributes to the NADP(+) binding site. NAD(+)-binding positions include 100-102 and 124-127; these read GTT and SGNM. His-157 acts as the Proton donor/acceptor in catalysis. His-158 contacts (S)-2,3,4,5-tetrahydrodipicolinate. Residue Lys-161 is the Proton donor of the active site. A (S)-2,3,4,5-tetrahydrodipicolinate-binding site is contributed by 167–168; it reads GT. Residues 183 to 202 form a disordered region; that stretch reads SLSEHEQRGRDGHTGPRKDG. A compositionally biased stretch (basic and acidic residues) spans 185-202; it reads SEHEQRGRDGHTGPRKDG.

It belongs to the DapB family.

Its subcellular location is the cytoplasm. The catalysed reaction is (S)-2,3,4,5-tetrahydrodipicolinate + NAD(+) + H2O = (2S,4S)-4-hydroxy-2,3,4,5-tetrahydrodipicolinate + NADH + H(+). It carries out the reaction (S)-2,3,4,5-tetrahydrodipicolinate + NADP(+) + H2O = (2S,4S)-4-hydroxy-2,3,4,5-tetrahydrodipicolinate + NADPH + H(+). It participates in amino-acid biosynthesis; L-lysine biosynthesis via DAP pathway; (S)-tetrahydrodipicolinate from L-aspartate: step 4/4. Functionally, catalyzes the conversion of 4-hydroxy-tetrahydrodipicolinate (HTPA) to tetrahydrodipicolinate. This is 4-hydroxy-tetrahydrodipicolinate reductase from Beijerinckia indica subsp. indica (strain ATCC 9039 / DSM 1715 / NCIMB 8712).